Consider the following 620-residue polypeptide: Dopamine beta-hydroxylase (620 aa).

Residues Met1–Arg19 lie on the Cytoplasmic side of the membrane. A helical; Signal-anchor for type II membrane protein transmembrane segment spans residues Glu20–Leu40. Residues Gln41 to His620 lie on the Intragranular side of the membrane. Residues Gly60–Leu176 form the DOMON domain. 2 N-linked (GlcNAc...) asparagine glycosylation sites follow: Asn67 and Asn187. 6 disulfides stabilise this stretch: Cys157–Cys599, Cys235–Cys286, Cys272–Cys298, Cys393–Cys506, Cys397–Cys568, and Cys469–Cys491. Tyr233 is a catalytic residue. Residues His265 and His266 each contribute to the Cu(2+) site. An N-linked (GlcNAc...) asparagine glycan is attached at Asn274. His336 serves as a coordination point for Cu(2+). Ser349 is subject to Phosphoserine; by CaMK. The active site involves His415. Positions 415 and 417 each coordinate Cu(2+). Asn475 is a glycosylation site (N-linked (GlcNAc...) asparagine). Met490 contacts Cu(2+). Asn569 and Asn587 each carry an N-linked (GlcNAc...) asparagine glycan.

The protein belongs to the copper type II ascorbate-dependent monooxygenase family. Homotetramer; composed of two disulfide-linked dimers. The cofactor is Cu(2+). Proteolytic cleavage after the membrane-anchor leads to the release of the soluble form. In terms of processing, N-glycosylated. As to expression, chromaffin granules of the adrenal medulla and synaptic vesicles of the sympathetic nervous system.

The protein resides in the cytoplasmic vesicle. It localises to the secretory vesicle lumen. Its subcellular location is the secretory vesicle. It is found in the chromaffin granule lumen. The protein localises to the secreted. The protein resides in the secretory vesicle membrane. It localises to the chromaffin granule membrane. The catalysed reaction is dopamine + 2 L-ascorbate + O2 = (R)-noradrenaline + 2 monodehydro-L-ascorbate radical + H2O. It functions in the pathway catecholamine biosynthesis; (R)-noradrenaline biosynthesis; (R)-noradrenaline from dopamine: step 1/1. Functionally, catalyzes the hydroxylation of dopamine to noradrenaline (also known as norepinephrine), and is thus vital for regulation of these neurotransmitters. This chain is Dopamine beta-hydroxylase (Dbh), found in Rattus norvegicus (Rat).